Here is a 242-residue protein sequence, read N- to C-terminus: Glutamine transport ATP-binding protein GlnQ (242 aa).

Residues 2–236 form the ABC transporter domain; sequence ITFQNVNKHY…PKEERARLFL (235 aa). 34–41 is an ATP binding site; it reads GPSGSGKS.

Belongs to the ABC transporter superfamily. As to quaternary structure, the complex is composed of two ATP-binding proteins (GlnQ), two transmembrane proteins (GlnM and GlnP) and a solute-binding protein (GlnH).

It is found in the cell membrane. In terms of biological role, part of the ABC transporter complex GlnHMPQ involved in glutamine transport. Probably responsible for energy coupling to the transport system. The protein is Glutamine transport ATP-binding protein GlnQ (glnQ) of Bacillus subtilis (strain 168).